We begin with the raw amino-acid sequence, 77 residues long: MSDVADRVKKIVVEHLGVEEDKVTESASFIDDLGADSLDTVELVMAFEEEFGIEIPDDAAETIQTFGDAVKFISEAS.

Positions 2-77 constitute a Carrier domain; it reads SDVADRVKKI…DAVKFISEAS (76 aa). Residue S37 is modified to O-(pantetheine 4'-phosphoryl)serine.

This sequence belongs to the acyl carrier protein (ACP) family. Post-translationally, 4'-phosphopantetheine is transferred from CoA to a specific serine of apo-ACP by AcpS. This modification is essential for activity because fatty acids are bound in thioester linkage to the sulfhydryl of the prosthetic group.

The protein resides in the cytoplasm. It participates in lipid metabolism; fatty acid biosynthesis. In terms of biological role, carrier of the growing fatty acid chain in fatty acid biosynthesis. The polypeptide is Acyl carrier protein (Ruegeria sp. (strain TM1040) (Silicibacter sp.)).